A 160-amino-acid chain; its full sequence is Peripheral myelin protein 22 (160 aa).

Position 1 (methionine 1) is a topological domain, cytoplasmic. The helical transmembrane segment at 2–31 (LLLLLSIIVLHVAVLVLLFVSTIVSQWIVG) threads the bilayer. The Extracellular segment spans residues 32-64 (NGHATDLWQNCSTSSSGNVHHCFSSSPNEWLQS). Residue asparagine 41 is glycosylated (N-linked (GlcNAc...) asparagine). A helical membrane pass occupies residues 65-91 (VQATMILSIIFSILSLFLFFCQLFTLT). Residues 92 to 95 (KGGR) lie on the Cytoplasmic side of the membrane. The helical transmembrane segment at 96–119 (FYITGIFQILAGLCVMSAAAIYTV) threads the bilayer. The Extracellular portion of the chain corresponds to 120 to 133 (RHPEWHLNSDYSYG). Residues 134 to 156 (FAYILAWVAFPLALLSGVIYVIL) form a helical membrane-spanning segment. At 157–160 (RKRE) the chain is on the cytoplasmic side.

It belongs to the PMP-22/EMP/MP20 family. Ubiquitinated by the DCX(DCAF13) E3 ubiquitin ligase complex, leading to its degradation.

The protein localises to the cell membrane. Its function is as follows. Might be involved in growth regulation, and in myelinization in the peripheral nervous system. This is Peripheral myelin protein 22 (PMP22) from Homo sapiens (Human).